Reading from the N-terminus, the 807-residue chain is Ecotropic viral integration site 5 ortholog (807 aa).

The interval M1 to L31 is disordered. T33 is subject to Phosphothreonine. Phosphoserine is present on residues S58 and S64. Residues G116–G300 form the Rab-GAP TBC domain. Coiled coils occupy residues S352–V463, C494–R583, and R627–F772.

In terms of assembly, interacts with Rab11.

It is found in the cytoplasm. Its subcellular location is the endosome. Its function is as follows. Functions as a GTPase-activating protein (GAP). During border cell migration in the ovary, acts as a GAP for Rab11 and is necessary for the maintenance of active receptor tyrosine kinases at the leading edge. The sequence is that of Ecotropic viral integration site 5 ortholog (Evi5) from Drosophila melanogaster (Fruit fly).